The following is a 554-amino-acid chain: Hydroxylamine reductase (554 aa).

[2Fe-2S] cluster is bound by residues cysteine 3, cysteine 6, cysteine 18, and cysteine 25. Hybrid [4Fe-2O-2S] cluster is bound by residues histidine 252, glutamate 276, cysteine 320, cysteine 408, cysteine 436, cysteine 461, glutamate 495, and lysine 497. Cysteine 408 carries the cysteine persulfide modification.

This sequence belongs to the HCP family. [2Fe-2S] cluster serves as cofactor. It depends on hybrid [4Fe-2O-2S] cluster as a cofactor.

It localises to the cytoplasm. It carries out the reaction A + NH4(+) + H2O = hydroxylamine + AH2 + H(+). Its function is as follows. Catalyzes the reduction of hydroxylamine to form NH(3) and H(2)O. In Shewanella sp. (strain MR-4), this protein is Hydroxylamine reductase.